Consider the following 311-residue polypeptide: Very-long-chain 3-oxoacyl-CoA reductase-B (311 aa).

The helical transmembrane segment at 8-28 threads the bilayer; the sequence is LFWVGAVTVLWLSVSSLWSLI. 48 to 77 is a binding site for NADP(+); the sequence is GKWAVVTGATDGIGKAYAEELARRGFAIVL. A helical transmembrane segment spans residues 125–145; that stretch reads IGVLVNNVGVSYSYPEFFLNI. Ser187 is a substrate binding site. Residue Tyr200 is the Proton acceptor of the active site. A helical transmembrane segment spans residues 269–289; that stretch reads GYLPHAIMGWVTASLLPAKLL.

This sequence belongs to the short-chain dehydrogenases/reductases (SDR) family. 17-beta-HSD 3 subfamily.

The protein localises to the endoplasmic reticulum membrane. The enzyme catalyses a very-long-chain (3R)-3-hydroxyacyl-CoA + NADP(+) = a very-long-chain 3-oxoacyl-CoA + NADPH + H(+). It catalyses the reaction 17beta-estradiol + NAD(+) = estrone + NADH + H(+). The catalysed reaction is 17beta-estradiol + NADP(+) = estrone + NADPH + H(+). The protein operates within lipid metabolism; fatty acid biosynthesis. It functions in the pathway steroid biosynthesis; estrogen biosynthesis. Its function is as follows. Catalyzes the second of the four reactions of the long-chain fatty acids elongation cycle. This endoplasmic reticulum-bound enzymatic process, allows the addition of two carbons to the chain of long- and very long-chain fatty acids/VLCFAs per cycle. This enzyme has a 3-ketoacyl-CoA reductase activity, reducing 3-ketoacyl-CoA to 3-hydroxyacyl-CoA, within each cycle of fatty acid elongation. Thereby, it may participate in the production of VLCFAs of different chain lengths that are involved in multiple biological processes as precursors of membrane lipids and lipid mediators. May also catalyze the transformation of estrone (E1) into estradiol (E2) and play a role in estrogen formation. The sequence is that of Very-long-chain 3-oxoacyl-CoA reductase-B (hsd17b12b) from Danio rerio (Zebrafish).